Here is a 174-residue protein sequence, read N- to C-terminus: Small heat shock protein OV25-1 (174 aa).

The sHSP domain maps to 50–161 (LNECNIGNTL…ASRNIPIRAS (112 aa)). Positions 153 to 174 (SRNIPIRASPKEPEAKQKTKKQ) are disordered. Basic and acidic residues predominate over residues 161–174 (SPKEPEAKQKTKKQ).

It belongs to the small heat shock protein (HSP20) family.

The polypeptide is Small heat shock protein OV25-1 (OV25-1) (Onchocerca volvulus).